The chain runs to 339 residues: Dihydroorotate dehydrogenase (quinone) (339 aa).

FMN is bound by residues 62-66 and threonine 86; that span reads AGMDK. Lysine 66 lines the substrate pocket. 111–115 is a substrate binding site; the sequence is NRMGF. Residues asparagine 139 and asparagine 172 each coordinate FMN. Asparagine 172 contacts substrate. Catalysis depends on serine 175, which acts as the Nucleophile. Position 177 (asparagine 177) interacts with substrate. FMN is bound by residues lysine 217 and threonine 245. Substrate is bound at residue 246 to 247; that stretch reads NT. FMN-binding positions include glycine 268, glycine 297, and 318–319; that span reads YS.

Belongs to the dihydroorotate dehydrogenase family. Type 2 subfamily. Monomer. FMN is required as a cofactor.

It is found in the cell membrane. The catalysed reaction is (S)-dihydroorotate + a quinone = orotate + a quinol. Its pathway is pyrimidine metabolism; UMP biosynthesis via de novo pathway; orotate from (S)-dihydroorotate (quinone route): step 1/1. Catalyzes the conversion of dihydroorotate to orotate with quinone as electron acceptor. In Shewanella piezotolerans (strain WP3 / JCM 13877), this protein is Dihydroorotate dehydrogenase (quinone).